We begin with the raw amino-acid sequence, 427 residues long: Nucleolar and spindle-associated protein 1 (427 aa).

A disordered region spans residues 41–190 (AHLNPETRKE…LGNNKRTSAT (150 aa)). Basic and acidic residues predominate over residues 43–55 (LNPETRKENKNQD). Over residues 83–96 (TKTRRRRRKKHKTI) the composition is skewed to basic residues. Residues 119 to 128 (NFQNQENQEN) show a composition bias toward low complexity. Ser-139 is subject to Phosphoserine. The segment covering 159–179 (NDIKDSKKPLEKRSLCTDEFS) has biased composition (basic and acidic residues). A compositionally biased stretch (polar residues) spans 181–190 (LGNNKRTSAT). Thr-191 carries the post-translational modification Phosphothreonine. A disordered region spans residues 235-312 (IVTPVPPRGR…QAVFRTPKSK (78 aa)). An interaction with microtubules region spans residues 243-367 (GRLSVPCTPA…HKGKLKPWGQ (125 aa)). Ser-246 carries the post-translational modification Phosphoserine. Thr-250 is subject to Phosphothreonine. Positions 252–264 (ARQQCPQGHSATK) are enriched in polar residues. Ser-261 carries the post-translational modification Phosphoserine. Thr-323 and Thr-334 each carry phosphothreonine. 2 positions are modified to phosphoserine: Ser-337 and Ser-348. The interval 354–427 (NYKPHKGKLK…RRNLGVTKAQ (74 aa)) is disordered. Residues 369–375 (KENNSLN) carry the KEN box motif. A coiled-coil region spans residues 393-425 (LQTREERWKRQEQERKEKKEKLLEARRNLGVTK). The span at 394 to 419 (QTREERWKRQEQERKEKKEKLLEARR) shows a compositional bias: basic and acidic residues.

This sequence belongs to the NUSAP family. As to quaternary structure, interacts with DNA and microtubules. Microtubule bundling is inhibited by IPO7, KPNA2 and KPNB1 while association with DNA is also inhibited by IPO7 and KPNA2. In terms of processing, ubiquitinated. Ubiquitination by FZR1 may lead to proteasome-dependent degradation of this protein.

The protein resides in the cytoplasm. Its subcellular location is the nucleus. It is found in the nucleolus. It localises to the cytoskeleton. The protein localises to the spindle. The protein resides in the chromosome. Microtubule-associated protein with the capacity to bundle and stabilize microtubules. May associate with chromosomes and promote the organization of mitotic spindle microtubules around them. The sequence is that of Nucleolar and spindle-associated protein 1 (Nusap1) from Mus musculus (Mouse).